Consider the following 448-residue polypeptide: UDP-glucose 6-dehydrogenase (448 aa).

Residues 2-19 (NITFIGSGYVGLVSGIIM), V11, D30, K35, T121, and E152 each bind NAD(+). Residues 148 to 152 (EFLRE), K204, N208, 249 to 253 (FLNAG), and G257 contribute to the substrate site. Residue C260 is the Nucleophile of the active site. K263 provides a ligand contact to NAD(+). K321 serves as a coordination point for substrate. An NAD(+)-binding site is contributed by R328.

The protein belongs to the UDP-glucose/GDP-mannose dehydrogenase family.

The enzyme catalyses UDP-alpha-D-glucose + 2 NAD(+) + H2O = UDP-alpha-D-glucuronate + 2 NADH + 3 H(+). It participates in nucleotide-sugar biosynthesis; UDP-alpha-D-glucuronate biosynthesis; UDP-alpha-D-glucuronate from UDP-alpha-D-glucose: step 1/1. The sequence is that of UDP-glucose 6-dehydrogenase (udg) from Rickettsia felis (strain ATCC VR-1525 / URRWXCal2) (Rickettsia azadi).